The chain runs to 2226 residues: Rotatin (2226 aa).

Positions 295–345 (ARGTHHSQNPSPGSSSPRPSVVGRTGQRPRGDGQDWDAASSSGSSSHAHVN) are disordered. Low complexity-rich tracts occupy residues 304–318 (PSPGSSSPRPSVVGR) and 332–343 (AASSSGSSSHAH). Serine 310 carries the post-translational modification Phosphoserine. Lysine 811 bears the N6-acetyllysine mark. Positions 1534 to 1554 (SRTSQDRDPSSLSTSETTVAP) are disordered. The span at 1543–1554 (SSLSTSETTVAP) shows a compositional bias: polar residues.

This sequence belongs to the rotatin family. As to quaternary structure, interacts with PPP1R35; this interaction allows the mutual recruitment to the centriole.

The protein resides in the cytoplasm. It is found in the cytoskeleton. Its subcellular location is the cilium basal body. It localises to the microtubule organizing center. The protein localises to the centrosome. Its function is as follows. Involved in the genetic cascade that governs left-right specification. Plays a role in the maintenance of a normal ciliary structure. Required for correct asymmetric expression of NODAL, LEFTY and PITX2. In Homo sapiens (Human), this protein is Rotatin.